We begin with the raw amino-acid sequence, 143 residues long: Transcriptional regulator MraZ (143 aa).

SpoVT-AbrB domains follow at residues 5 to 47 and 76 to 119; these read TYTP…PRSE and TDEQ…DAQA.

Belongs to the MraZ family. Forms oligomers.

The protein resides in the cytoplasm. It is found in the nucleoid. The polypeptide is Transcriptional regulator MraZ (Mycobacterium ulcerans (strain Agy99)).